The chain runs to 202 residues: Peptide methionine sulfoxide reductase A3 (202 aa).

The interval 1-34 (MNILNRLGLGSSGQTNMDPSPIAQGNDDDTPAPG) is disordered. S189 carries the post-translational modification Phosphoserine.

It belongs to the MsrA Met sulfoxide reductase family. As to expression, expressed in rosette and cauline leaves, and at lower levels in roots, stems and flowers (at protein level).

It is found in the cytoplasm. The protein resides in the cytosol. It carries out the reaction L-methionyl-[protein] + [thioredoxin]-disulfide + H2O = L-methionyl-(S)-S-oxide-[protein] + [thioredoxin]-dithiol. The enzyme catalyses [thioredoxin]-disulfide + L-methionine + H2O = L-methionine (S)-S-oxide + [thioredoxin]-dithiol. Catalyzes the reduction of methionine sulfoxide (MetSO) to methionine in proteins. Plays a protective role against oxidative stress by restoring activity to proteins that have been inactivated by methionine oxidation. May prevent cellular oxidative damage due to light exposure. MSRA family specifically reduces the MetSO S-enantiomer. The sequence is that of Peptide methionine sulfoxide reductase A3 (MSRA3) from Arabidopsis thaliana (Mouse-ear cress).